Consider the following 419-residue polypeptide: Metacaspase-1B (419 aa).

The disordered stretch occupies residues 1–109; it reads MYHPNYNYPP…PPMEAQQFGK (109 aa). Residues 33–50 are compositionally biased toward pro residues; sequence SPPPPQPYYSNGYPPPSQ. Low complexity predominate over residues 51-66; it reads SPHSYSPPQYPPHGQY. A compositionally biased stretch (polar residues) spans 82 to 93; that stretch reads QYRSYHSHSPSW. Catalysis depends on residues His-210 and Cys-266.

Belongs to the peptidase C14B family.

Involved in cell death (apoptosis). The polypeptide is Metacaspase-1B (casB) (Aspergillus oryzae (strain ATCC 42149 / RIB 40) (Yellow koji mold)).